A 472-amino-acid polypeptide reads, in one-letter code: Ribulose bisphosphate carboxylase large chain 1 (472 aa).

Residues Asn115 and Thr165 each coordinate substrate. Lys167 (proton acceptor) is an active-site residue. Residue Lys169 coordinates substrate. Positions 193, 195, and 196 each coordinate Mg(2+). N6-carboxylysine is present on Lys193. Catalysis depends on His286, which acts as the Proton acceptor. Substrate-binding residues include Arg287, His319, and Ser371.

This sequence belongs to the RuBisCO large chain family. Type I subfamily. As to quaternary structure, heterohexadecamer of 8 large chains and 8 small chains. Mg(2+) serves as cofactor.

The enzyme catalyses 2 (2R)-3-phosphoglycerate + 2 H(+) = D-ribulose 1,5-bisphosphate + CO2 + H2O. It carries out the reaction D-ribulose 1,5-bisphosphate + O2 = 2-phosphoglycolate + (2R)-3-phosphoglycerate + 2 H(+). Functionally, ruBisCO catalyzes two reactions: the carboxylation of D-ribulose 1,5-bisphosphate, the primary event in carbon dioxide fixation, as well as the oxidative fragmentation of the pentose substrate. Both reactions occur simultaneously and in competition at the same active site. The protein is Ribulose bisphosphate carboxylase large chain 1 of Rhodopseudomonas palustris (strain BisB5).